A 99-amino-acid chain; its full sequence is Malonate decarboxylase acyl carrier protein (99 aa).

The residue at position 25 (S25) is an O-(phosphoribosyl dephospho-coenzyme A)serine.

Belongs to the MdcC family. Covalently binds the prosthetic group of malonate decarboxylase.

It localises to the cytoplasm. In terms of biological role, subunit of malonate decarboxylase, it is an acyl carrier protein to which acetyl and malonyl thioester residues are bound via a 2'-(5''-phosphoribosyl)-3'-dephospho-CoA prosthetic group and turn over during the catalytic mechanism. This is Malonate decarboxylase acyl carrier protein from Pseudomonas putida (strain GB-1).